The sequence spans 230 residues: Sugar fermentation stimulation protein homolog (230 aa).

The protein belongs to the SfsA family.

The protein is Sugar fermentation stimulation protein homolog of Clostridium tetani (strain Massachusetts / E88).